A 54-amino-acid polypeptide reads, in one-letter code: Protein YmjE (54 aa).

The protein is Protein YmjE of Escherichia coli (strain K12).